A 490-amino-acid chain; its full sequence is GTPase Der (490 aa).

EngA-type G domains lie at 3-166 (PVVA…MEDL) and 203-376 (IKLA…DSST). GTP-binding positions include 9-16 (GRPNVGKS), 56-60 (DTGGI), 118-121 (NKTD), 209-216 (GRPNVGKS), 256-260 (DTAGV), and 321-324 (NKWD). The KH-like domain maps to 377-461 (RRVGTSMLTR…PIRIQFKEGE (85 aa)).

This sequence belongs to the TRAFAC class TrmE-Era-EngA-EngB-Septin-like GTPase superfamily. EngA (Der) GTPase family. In terms of assembly, associates with the 50S ribosomal subunit.

In terms of biological role, GTPase that plays an essential role in the late steps of ribosome biogenesis. The chain is GTPase Der from Escherichia coli O157:H7.